Reading from the N-terminus, the 705-residue chain is Ovotransferrin (705 aa).

Positions 1-19 (MKLILCTVLSLGIAAVCFA) are cleaved as a signal peptide. 2 Transferrin-like domains span residues 26-352 (IRWC…SMRK) and 364-689 (IQWC…SLKT). Cystine bridges form between Cys-29–Cys-64 and Cys-39–Cys-55. Residues Asp-79 and Tyr-111 each contribute to the Fe(3+) site. Disulfide bonds link Cys-134-Cys-216, Cys-179-Cys-193, Cys-190-Cys-201, and Cys-247-Cys-261. Positions 136, 140, 142, and 143 each coordinate hydrogencarbonate. Residue Tyr-210 participates in Fe(3+) binding. Residue His-269 coordinates Fe(3+). Positions 352–360 (KDQLTPSPR) are connecting region. 2 cysteine pairs are disulfide-bonded: Cys-367–Cys-399 and Cys-377–Cys-390. Asp-414 and Tyr-450 together coordinate Fe(3+). 7 disulfide bridges follow: Cys-424/Cys-699, Cys-440/Cys-662, Cys-473/Cys-549, Cys-497/Cys-690, Cys-507/Cys-521, Cys-518/Cys-532, and Cys-589/Cys-603. Residues Thr-475, Arg-479, Ala-481, and Gly-482 each contribute to the hydrogencarbonate site. Asn-492 carries an N-linked (GlcNAc...) asparagine glycan. Tyr-543 contacts Fe(3+). A Fe(3+)-binding site is contributed by His-611.

It belongs to the transferrin family. Monomer. Post-translationally, different forms of hen transferrin are distinguished by their carbohydrate composition. Ovotransferrin and embryo serum transferrin but not adult serum transferrin, have bisecting N-acetylglucosamine. Transferrin secreted by embryo hepatocytes in primary culture is marked by the presence of (alpha1-6) fucosylation of the core N-acetylglucosamine. Serum transferrins also differ in the number of attached neuraminic acid residues. In both embryo forms, sialylation occurs on the Man (alpha 1-3)-linked antennae. In terms of tissue distribution, expressed in the magnum of the oviduct (at protein level).

The protein localises to the secreted. Functionally, transferrins are iron binding transport proteins which can bind two Fe(3+) ions in association with the binding of an anion, usually bicarbonate. Responsible for the transport of iron from sites of absorption and heme degradation to those of storage and utilization. There are two forms of hen transferrin, ovotransferrin, found in the ovoducts and, serum transferrin, secreted by the liver. Serum transferrin may also have a role in stimulating cell proliferation and is regulated by iron levels. Ovotransferrin has a bacteriostatic function and, is not controlled by iron levels. The sequence is that of Ovotransferrin from Gallus gallus (Chicken).